The sequence spans 81 residues: Photosystem I iron-sulfur center (81 aa).

2 4Fe-4S ferredoxin-type domains span residues 2-31 (SHSVKIYDTCIGCTQCVRACPTDVLEMIPW) and 39-68 (IASAPRTEDCVGCKRCESACPTDFLSVRVY). [4Fe-4S] cluster is bound by residues Cys-11, Cys-14, Cys-17, Cys-21, Cys-48, Cys-51, Cys-54, and Cys-58.

In terms of assembly, the eukaryotic PSI reaction center is composed of at least 11 subunits. Requires [4Fe-4S] cluster as cofactor.

It is found in the plastid. It localises to the chloroplast thylakoid membrane. It carries out the reaction reduced [plastocyanin] + hnu + oxidized [2Fe-2S]-[ferredoxin] = oxidized [plastocyanin] + reduced [2Fe-2S]-[ferredoxin]. Functionally, apoprotein for the two 4Fe-4S centers FA and FB of photosystem I (PSI); essential for photochemical activity. FB is the terminal electron acceptor of PSI, donating electrons to ferredoxin. The C-terminus interacts with PsaA/B/D and helps assemble the protein into the PSI complex. Required for binding of PsaD and PsaE to PSI. PSI is a plastocyanin-ferredoxin oxidoreductase, converting photonic excitation into a charge separation, which transfers an electron from the donor P700 chlorophyll pair to the spectroscopically characterized acceptors A0, A1, FX, FA and FB in turn. The polypeptide is Photosystem I iron-sulfur center (Helianthus annuus (Common sunflower)).